Here is a 352-residue protein sequence, read N- to C-terminus: tRNA-specific 2-thiouridylase MnmA (352 aa).

ATP contacts are provided by residues 7-14 (GLSGGVDS) and Leu33. Cys94 acts as the Nucleophile in catalysis. An intrachain disulfide couples Cys94 to Cys193. ATP is bound at residue Gly119. The segment at 143 to 145 (KDQ) is interaction with tRNA. The Cysteine persulfide intermediate role is filled by Cys193. Residues 298–299 (RY) form an interaction with tRNA region.

The protein belongs to the MnmA/TRMU family.

It localises to the cytoplasm. The enzyme catalyses S-sulfanyl-L-cysteinyl-[protein] + uridine(34) in tRNA + AH2 + ATP = 2-thiouridine(34) in tRNA + L-cysteinyl-[protein] + A + AMP + diphosphate + H(+). Its function is as follows. Catalyzes the 2-thiolation of uridine at the wobble position (U34) of tRNA, leading to the formation of s(2)U34. This is tRNA-specific 2-thiouridylase MnmA from Nostoc sp. (strain PCC 7120 / SAG 25.82 / UTEX 2576).